The sequence spans 1005 residues: uncharacterized protein (1005 aa).

An N-terminal signal peptide occupies residues 1 to 24 (MKFQRKYWGLLSTLGVSSAVALSA). Cys25 carries N-palmitoyl cysteine lipidation. Cys25 is lipidated: S-diacylglycerol cysteine. Disordered regions lie at residues 105–165 (KKDK…EEKF) and 786–825 (TQKIDQQNTASTTSDVTVKKADSSQDSSKSNTEEEKWDDV). Composition is skewed to low complexity over residues 110-131 (TSSQKTSTNSSCTTTSSGTSTS) and 145-156 (QSSSNGQNNQQS). A compositionally biased stretch (polar residues) spans 786-801 (TQKIDQQNTASTTSDV).

The protein localises to the cell membrane. This is an uncharacterized protein from Mycoplasma pneumoniae (strain ATCC 29342 / M129 / Subtype 1) (Mycoplasmoides pneumoniae).